We begin with the raw amino-acid sequence, 241 residues long: Small ribosomal subunit protein bS6 (241 aa).

Residues 97-108 (KPKIRERNRKYT) are compositionally biased toward basic residues. The disordered stretch occupies residues 97 to 241 (KPKIRERNRK…YNNKKPQSSN (145 aa)). Basic and acidic residues predominate over residues 109 to 118 (LRRDRFDKPN). Composition is skewed to low complexity over residues 130–151 (QDQQATKNQQNFQQNQQNQASQ) and 161–182 (DDFQQVSSNQQNFGQNQQNQSG). The segment covering 183–193 (YHRENNRHNQE) has biased composition (basic and acidic residues). A compositionally biased stretch (low complexity) spans 194 to 210 (NMHQNNKNHQNQTSQTQ).

Belongs to the bacterial ribosomal protein bS6 family.

In terms of biological role, binds together with bS18 to 16S ribosomal RNA. This Mesomycoplasma hyopneumoniae (strain J / ATCC 25934 / NCTC 10110) (Mycoplasma hyopneumoniae) protein is Small ribosomal subunit protein bS6.